The sequence spans 377 residues: Queuine tRNA-ribosyltransferase (377 aa).

Aspartate 94 (proton acceptor) is an active-site residue. Substrate is bound by residues 94-98, aspartate 148, glutamine 191, and glycine 218; that span reads DSGGF. The tract at residues 249–255 is RNA binding; the sequence is GVGTPDD. Aspartate 268 serves as the catalytic Nucleophile. Residues 273–277 form an RNA binding; important for wobble base 34 recognition region; the sequence is TRAGR.

This sequence belongs to the queuine tRNA-ribosyltransferase family. As to quaternary structure, homodimer. Within each dimer, one monomer is responsible for RNA recognition and catalysis, while the other monomer binds to the replacement base PreQ1.

It catalyses the reaction 7-aminomethyl-7-carbaguanine + guanosine(34) in tRNA = 7-aminomethyl-7-carbaguanosine(34) in tRNA + guanine. It functions in the pathway tRNA modification; tRNA-queuosine biosynthesis. Functionally, catalyzes the base-exchange of a guanine (G) residue with the queuine precursor 7-aminomethyl-7-deazaguanine (PreQ1) at position 34 (anticodon wobble position) in tRNAs with GU(N) anticodons (tRNA-Asp, -Asn, -His and -Tyr). Catalysis occurs through a double-displacement mechanism. The nucleophile active site attacks the C1' of nucleotide 34 to detach the guanine base from the RNA, forming a covalent enzyme-RNA intermediate. The proton acceptor active site deprotonates the incoming PreQ1, allowing a nucleophilic attack on the C1' of the ribose to form the product. After dissociation, two additional enzymatic reactions on the tRNA convert PreQ1 to queuine (Q), resulting in the hypermodified nucleoside queuosine (7-(((4,5-cis-dihydroxy-2-cyclopenten-1-yl)amino)methyl)-7-deazaguanosine). This is Queuine tRNA-ribosyltransferase from Brucella melitensis biotype 1 (strain ATCC 23456 / CCUG 17765 / NCTC 10094 / 16M).